Here is a 328-residue protein sequence, read N- to C-terminus: Malate dehydrogenase (328 aa).

Residue 12–18 (GAAGQIA) coordinates NAD(+). Residues Arg93 and Arg99 each coordinate substrate. Residues Asn106, Gln113, and 130-132 (VGN) contribute to the NAD(+) site. Residues Asn132 and Arg163 each contribute to the substrate site. His188 functions as the Proton acceptor in the catalytic mechanism.

Belongs to the LDH/MDH superfamily. MDH type 2 family.

The enzyme catalyses (S)-malate + NAD(+) = oxaloacetate + NADH + H(+). Its function is as follows. Catalyzes the reversible oxidation of malate to oxaloacetate. This Burkholderia ambifaria (strain ATCC BAA-244 / DSM 16087 / CCUG 44356 / LMG 19182 / AMMD) (Burkholderia cepacia (strain AMMD)) protein is Malate dehydrogenase.